Reading from the N-terminus, the 369-residue chain is Anhydro-N-acetylmuramic acid kinase (369 aa).

9–16 (GTSLDAVD) serves as a coordination point for ATP.

The protein belongs to the anhydro-N-acetylmuramic acid kinase family.

The catalysed reaction is 1,6-anhydro-N-acetyl-beta-muramate + ATP + H2O = N-acetyl-D-muramate 6-phosphate + ADP + H(+). It participates in amino-sugar metabolism; 1,6-anhydro-N-acetylmuramate degradation. It functions in the pathway cell wall biogenesis; peptidoglycan recycling. Functionally, catalyzes the specific phosphorylation of 1,6-anhydro-N-acetylmuramic acid (anhMurNAc) with the simultaneous cleavage of the 1,6-anhydro ring, generating MurNAc-6-P. Is required for the utilization of anhMurNAc either imported from the medium or derived from its own cell wall murein, and thus plays a role in cell wall recycling. The chain is Anhydro-N-acetylmuramic acid kinase from Phenylobacterium zucineum (strain HLK1).